A 352-amino-acid polypeptide reads, in one-letter code: Bifunctional protein FolD 1, mitochondrial (352 aa).

Residues 1–23 (MLMIARKALASAHTKAFRLATRD) constitute a mitochondrion transit peptide.

Belongs to the tetrahydrofolate dehydrogenase/cyclohydrolase family. As to quaternary structure, homodimer.

It localises to the mitochondrion. The catalysed reaction is (6R)-5,10-methylene-5,6,7,8-tetrahydrofolate + NADP(+) = (6R)-5,10-methenyltetrahydrofolate + NADPH. It carries out the reaction (6R)-5,10-methenyltetrahydrofolate + H2O = (6R)-10-formyltetrahydrofolate + H(+). The protein operates within one-carbon metabolism; tetrahydrofolate interconversion. In terms of biological role, catalyzes the oxidation of 5,10-methylenetetrahydrofolate to 5,10-methenyltetrahydrofolate and then the hydrolysis of 5,10-methenyltetrahydrofolate to 10-formyltetrahydrofolate. This Arabidopsis thaliana (Mouse-ear cress) protein is Bifunctional protein FolD 1, mitochondrial (FOLD1).